The primary structure comprises 879 residues: Alanine--tRNA ligase (879 aa).

Zn(2+) contacts are provided by His-564, His-568, Cys-666, and His-670.

This sequence belongs to the class-II aminoacyl-tRNA synthetase family. Zn(2+) is required as a cofactor.

The protein localises to the cytoplasm. The catalysed reaction is tRNA(Ala) + L-alanine + ATP = L-alanyl-tRNA(Ala) + AMP + diphosphate. Catalyzes the attachment of alanine to tRNA(Ala) in a two-step reaction: alanine is first activated by ATP to form Ala-AMP and then transferred to the acceptor end of tRNA(Ala). Also edits incorrectly charged Ser-tRNA(Ala) and Gly-tRNA(Ala) via its editing domain. This is Alanine--tRNA ligase from Crocosphaera subtropica (strain ATCC 51142 / BH68) (Cyanothece sp. (strain ATCC 51142)).